A 1074-amino-acid polypeptide reads, in one-letter code: DNA helicase B (1074 aa).

3 disordered regions span residues 1–38 (MARQ…EEEF), 380–420 (GAKP…HVRS), and 932–1014 (GSCA…FDEE). A compositionally biased stretch (acidic residues) spans 20 to 38 (DDEEEDCAQEEEGEQEEEF). Polar residues predominate over residues 934–946 (CAPSTGFASQPSS). A phosphoserine mark is found at Ser942 and Ser946. Thr992 is modified (phosphothreonine). A phosphoserine mark is found at Ser1015 and Ser1026. The Nuclear export signal signature appears at 1022–1046 (VEAPSPQVSSVFQNMRLNTLTPRQL). The tract at residues 1040 to 1074 (TLTPRQLFKPTDNQDTGTAGVADDANDPSNQEMEM) is disordered.

It belongs to the RecD family. HELB subfamily. Binds to RPA1; this interaction promotes HELB recruitment to chromatin following DNA damage. Interacts with at least two subunits of the DNA polymerase alpha complex. Interacts with CDC45. Interacts with TOPB1. In terms of processing, phosphorylated at Ser-942 by CDK2 during the G1/S transition, resulting in its nuclear export into the cytoplasm. As S phase progresses, its exclusion from the nucleus promotes the activation of long-range resection.

The protein resides in the nucleus. It is found in the cytoplasm. It localises to the chromosome. The catalysed reaction is ATP + H2O = ADP + phosphate + H(+). Its function is as follows. 5'-3' DNA helicase involved in DNA damage response by acting as an inhibitor of DNA end resection. Recruitment to single-stranded DNA (ssDNA) following DNA damage leads to inhibit the nucleases catalyzing resection, such as EXO1, BLM and DNA2, possibly via the 5'-3' ssDNA translocase activity of HELB. As cells approach S phase, DNA end resection is promoted by the nuclear export of HELB following phosphorylation. Acts independently of TP53BP1. Unwinds duplex DNA with 5'-3' polarity. Has single-strand DNA-dependent ATPase and DNA helicase activities. Prefers ATP and dATP as substrates. During S phase, may facilitate cellular recovery from replication stress. This Mus musculus (Mouse) protein is DNA helicase B.